The primary structure comprises 291 residues: 4-diphosphocytidyl-2-C-methyl-D-erythritol kinase (291 aa).

Lysine 10 is a catalytic residue. 99–109 provides a ligand contact to ATP; sequence PMGGGLGGGSS. Aspartate 141 is an active-site residue.

The protein belongs to the GHMP kinase family. IspE subfamily. As to quaternary structure, homodimer.

The catalysed reaction is 4-CDP-2-C-methyl-D-erythritol + ATP = 4-CDP-2-C-methyl-D-erythritol 2-phosphate + ADP + H(+). It functions in the pathway isoprenoid biosynthesis; isopentenyl diphosphate biosynthesis via DXP pathway; isopentenyl diphosphate from 1-deoxy-D-xylulose 5-phosphate: step 3/6. Catalyzes the phosphorylation of the position 2 hydroxy group of 4-diphosphocytidyl-2C-methyl-D-erythritol. This Proteus mirabilis (strain HI4320) protein is 4-diphosphocytidyl-2-C-methyl-D-erythritol kinase.